We begin with the raw amino-acid sequence, 321 residues long: Gap junction delta-2 protein (321 aa).

Residues 1-19 are Cytoplasmic-facing; that stretch reads MGEWTILERLLEAAVQQHS. The chain crosses the membrane as a helical span at residues 20–42; the sequence is TMIGRILLTVVVIFRILIVAIVG. Over 43–75 the chain is Extracellular; it reads ETVYDDEQTMFVCNTLQPGCNQACYDRAFPISH. The chain crosses the membrane as a helical span at residues 76 to 98; the sequence is IRYWVFQIIMVCTPSLCFITYSV. Residues 99–197 are Cytoplasmic-facing; sequence HQSAKQRERR…KLRRQEGISR (99 aa). The interval 120–141 is disordered; sequence PAESIGGPGGTGGGGSGGSKRE. The span at 125-137 shows a compositional bias: gly residues; the sequence is GGPGGTGGGGSGG. The chain crosses the membrane as a helical span at residues 198-220; it reads FYIIQVVFRNALEIGFLVGQYFL. The Extracellular segment spans residues 221 to 252; the sequence is YGFSVPGLYECNRYPCIKEVECYVSRPTEKTV. The chain crosses the membrane as a helical span at residues 253-275; the sequence is FLVFMFAVSGICVVLNLAELNHL. Topologically, residues 276–321 are cytoplasmic; it reads GWRKIKLAVRGAQAKRKSVYEIRNKDLPRVSVPNFGRTQSSDSAYV.

The protein belongs to the connexin family. Delta-type subfamily. As to quaternary structure, a connexon is composed of a hexamer of connexins. Highly expressed in neurons.

It localises to the cell membrane. The protein localises to the cell junction. Its subcellular location is the gap junction. In terms of biological role, one gap junction consists of a cluster of closely packed pairs of transmembrane channels, the connexons, through which materials of low MW diffuse from one cell to a neighboring cell. This is Gap junction delta-2 protein (Gjd2) from Mus musculus (Mouse).